The primary structure comprises 578 residues: Dapdiamide synthesis protein DdaD (578 aa).

A Carrier domain is found at E498 to S573. O-(pantetheine 4'-phosphoryl)serine is present on S533.

This sequence belongs to the ATP-dependent AMP-binding enzyme family. Pantetheine 4'-phosphate serves as cofactor.

It participates in antibiotic biosynthesis. Its function is as follows. Involved in dapdiamide antibiotics biosynthesis. Activates and sequesters N-beta-fumaramoyl-DAP as a covalently tethered thioester for subsequent oxidative modification of the fumaramoyl group. The sequence is that of Dapdiamide synthesis protein DdaD from Enterobacter agglomerans (Erwinia herbicola).